A 2493-amino-acid chain; its full sequence is Adenylate cyclase (2493 aa).

5 stretches are compositionally biased toward polar residues: residues 1 to 18, 42 to 51, 60 to 78, 129 to 147, and 197 to 210; these read MLFT…SPEQ, RDSNGSSNFT, SQQY…QPDI, PANS…SISP, and APFS…TSVN. 9 disordered regions span residues 1 to 85, 99 to 148, 197 to 325, 355 to 444, 475 to 565, 616 to 660, 753 to 832, 854 to 882, and 904 to 967; these read MLFT…SSTL, FEHA…ISPS, APFS…SSLS, NSPS…QSQS, GSIT…VNML, QAPV…KTSY, NVGE…GSKS, ALVQ…GAGA, and RPSK…ATGT. The span at 211-233 shows a compositional bias: low complexity; sequence PSAASTASPSTSAATRTRPRGGT. Polar residues-rich tracts occupy residues 234–246 and 253–264; these read NASQ…TSFG and LSSSRSQYSLRP. Basic residues-rich tracts occupy residues 287–303 and 404–422; these read AVKK…KKSS and HLKK…HLAK. Over residues 425–434 the composition is skewed to basic and acidic residues; that stretch reads KPGEDADSAR. The segment covering 500–525 has biased composition (polar residues); sequence PSPSQTPIAERQTSVTSTVESPSHAS. Low complexity predominate over residues 534 to 555; sequence SLRTPSRTTASTSTSSASTVLS. Residues 630–640 show a composition bias toward basic and acidic residues; it reads TDSELSDRKDS. The segment covering 641–660 has biased composition (polar residues); the sequence is VVSTHSMRSNHSGISPKTSY. Acidic residues predominate over residues 754 to 763; sequence VGEEEDDDDD. Low complexity-rich tracts occupy residues 780 to 791 and 854 to 870; these read SSSGISSTHASS and ALVQ…QPSP. Positions 913–935 are enriched in polar residues; the sequence is RPNTAGSVGATRPSTTTLGSTLS. The Ras-associating domain maps to 970–1072; the sequence is RNHFIRVYKT…LRFVFRPDSV (103 aa). LRR repeat units lie at residues 1086 to 1107, 1110 to 1132, 1134 to 1155, 1157 to 1178, 1181 to 1202, 1204 to 1225, 1227 to 1248, 1250 to 1271, 1273 to 1294, 1295 to 1316, 1317 to 1336, 1339 to 1360, 1363 to 1385, 1386 to 1407, 1409 to 1430, 1432 to 1453, 1511 to 1534, 1535 to 1556, 1559 to 1580, 1583 to 1605, 1606 to 1628, and 1635 to 1654; these read TFQH…LYKH, WIVS…VQLC, SLRT…VRHS, TLTH…SLDL, ELMS…FSSI, TLRN…ICDV, SLVD…IANL, NLER…MSEL, SLRT…LGLP, RLQN…LGPQ, LTQV…AALT, DLTS…LFPQ, ALVK…GDLK, RLEM…IGDL, ALKE…LWLC, SLAH…PDIR, SLQK…SELT, SLEV…SLQT, KLRE…DLVV, ELRI…GKLK, KLAN…HYDW, and ELRY…TKLS. Residues 1710–2000 enclose the PPM-type phosphatase domain; that stretch reads AYGIADALGK…ESIMVMVISV (291 aa). The Guanylate cyclase domain occupies 2058–2194; sequence ALVFTDIKNS…PMVNRAARIS (137 aa). Mg(2+) contacts are provided by aspartate 2063 and aspartate 2105. 3 disordered regions span residues 2220-2241, 2354-2378, and 2467-2493; these read DESS…TEEE, EADR…HGTA, and PPRA…ELVP. Positions 2470–2485 are enriched in polar residues; the sequence is ASTSALSLPSPRTSPR.

It belongs to the adenylyl cyclase class-3 family. It depends on Mg(2+) as a cofactor.

It carries out the reaction ATP = 3',5'-cyclic AMP + diphosphate. Plays essential roles in regulation of cellular metabolism by catalyzing the synthesis of a second messenger, cAMP. This is Adenylate cyclase (UAC1) from Mycosarcoma maydis (Corn smut fungus).